A 323-amino-acid polypeptide reads, in one-letter code: Viral cathepsin (323 aa).

The first 16 residues, 1 to 16, serve as a signal peptide directing secretion; the sequence is MNKILFYLFVYGVVNS. Positions 17–112 are cleaved as a propeptide — activation peptide; it reads AAYDLLKAPN…IVLDQPPGKG (96 aa). Cystine bridges form between Cys133–Cys174, Cys167–Cys207, and Cys262–Cys310. Cys136 is an active-site residue. A glycan (N-linked (GlcNAc...) asparagine; by host) is linked at Asn158. Active-site residues include His269 and Asn289.

Belongs to the peptidase C1 family. In terms of processing, synthesized as an inactive proenzyme and activated by proteolytic removal of the inhibitory propeptide.

It catalyses the reaction Endopeptidase of broad specificity, hydrolyzing substrates of both cathepsin L and cathepsin B.. Its function is as follows. Cysteine protease that plays an essential role in host liquefaction to facilitate horizontal transmission of the virus. May participate in the degradation of foreign protein expressed by the baculovirus system. The sequence is that of Viral cathepsin (VCATH) from Helicoverpa zea (Corn earworm moth).